Consider the following 554-residue polypeptide: Glutamine--tRNA ligase (554 aa).

A 'HIGH' region motif is present at residues 34-44 (PEPNGYLHIGH). ATP is bound by residues 35–37 (EPN) and 41–47 (HIGHAKS). Residues D67 and Y212 each coordinate L-glutamine. ATP contacts are provided by residues T231, 261 to 262 (RL), and 269 to 271 (MSK). A 'KMSKS' region motif is present at residues 268-272 (VMSKR). The tract at residues 317–324 (TKQDNTIE) is interaction with tRNA.

Belongs to the class-I aminoacyl-tRNA synthetase family. In terms of assembly, monomer.

The protein localises to the cytoplasm. It catalyses the reaction tRNA(Gln) + L-glutamine + ATP = L-glutaminyl-tRNA(Gln) + AMP + diphosphate. The chain is Glutamine--tRNA ligase from Escherichia coli O7:K1 (strain IAI39 / ExPEC).